A 333-amino-acid polypeptide reads, in one-letter code: Adenosine deaminase (333 aa).

Positions 12 and 14 each coordinate Zn(2+). Substrate-binding residues include His-14, Asp-16, and Gly-170. His-197 is a binding site for Zn(2+). The active-site Proton donor is Glu-200. Asp-278 contacts Zn(2+). Residue Asp-279 participates in substrate binding.

It belongs to the metallo-dependent hydrolases superfamily. Adenosine and AMP deaminases family. Adenosine deaminase subfamily. Zn(2+) is required as a cofactor.

The enzyme catalyses adenosine + H2O + H(+) = inosine + NH4(+). It carries out the reaction 2'-deoxyadenosine + H2O + H(+) = 2'-deoxyinosine + NH4(+). Its function is as follows. Catalyzes the hydrolytic deamination of adenosine and 2-deoxyadenosine. This Escherichia coli (strain SE11) protein is Adenosine deaminase.